A 194-amino-acid polypeptide reads, in one-letter code: E3 ubiquitin-protein ligase RNF185 (194 aa).

The segment at 1 to 32 (MASKGPTTSASTKSSSTGGTSGSSSSNGAGDN) is disordered. Residues 31–82 (DNTNQDNTFECNICLDTAKDAVISLCGHLFCWPCLHQWLETRPNRQVCPVCK) form a required for ubiquitin ligase activity and protection against ER stress-induced cell death region. Residues 41 to 82 (CNICLDTAKDAVISLCGHLFCWPCLHQWLETRPNRQVCPVCK) form an RING-type zinc finger. Positions 92–125 (PLYGRGSTGQQDPREKTPPRPQGQRPEPENRGGF) are disordered. Helical transmembrane passes span 133–153 (GGFQMSFGIGAFPFGIFATAF) and 174–194 (QFLSRLFLFVALVIMFWLLIA).

It localises to the mitochondrion outer membrane. Its subcellular location is the endoplasmic reticulum membrane. The enzyme catalyses S-ubiquitinyl-[E2 ubiquitin-conjugating enzyme]-L-cysteine + [acceptor protein]-L-lysine = [E2 ubiquitin-conjugating enzyme]-L-cysteine + N(6)-ubiquitinyl-[acceptor protein]-L-lysine.. The protein operates within protein modification; protein ubiquitination. Functionally, E3 ubiquitin-protein ligase that regulates selective mitochondrial autophagy by mediating 'Lys-63'-linked polyubiquitination. Acts in the endoplasmic reticulum (ER)-associated degradation (ERAD) pathway, which targets misfolded proteins that accumulate in the endoplasmic reticulum (ER) for ubiquitination and subsequent proteasome-mediated degradation. Protects cells from ER stress-induced apoptosis. Responsible for the cotranslational ubiquitination and degradation of CFTR in the ERAD pathway. Also acts as a regulator of the innate antiviral response by catalyzing 'Lys-27'-linked polyubiquitination of CGAS, thereby promoting CGAS cyclic GMP-AMP synthase activity. Preferentially associates with the E2 enzymes UBE2J1 and UBE2J2. The protein is E3 ubiquitin-protein ligase RNF185 (RNF185) of Gallus gallus (Chicken).